Here is a 672-residue protein sequence, read N- to C-terminus: Zinc finger and BTB domain-containing protein 24 (672 aa).

The region spanning 39–105 is the BTB domain; the sequence is CDITLIVEDV…MYSAVVLVDE (67 aa). The tract at residues 136-208 is disordered; the sequence is HMQVKRKRGR…GKRKIKQPIR (73 aa). The a.T hook 1 DNA-binding region spans 140–152; the sequence is KRKRGRPKKNQDL. The segment covering 148-158 has biased composition (basic and acidic residues); that stretch reads KNQDLSQKENP. Residues 160–171 show a composition bias toward polar residues; the sequence is SELQAQTSSEIQ. The span at 198 to 208 shows a compositional bias: basic residues; sequence EGKRKIKQPIR. Positions 223–235 form a DNA-binding region, a.T hook 2; sequence PGKRGRRRKYPDT. 8 C2H2-type zinc fingers span residues 237–259, 265–287, 293–315, 321–343, 349–371, 377–399, 405–427, and 433–455; these read ARCE…QRTH, FRCS…QRMH, YICT…MNLH, FTCE…NRVH, PECA…LRTH, FTCE…IRIH, YVCK…EVSH, and FSCS…IKTH. The tract at residues 453–492 is disordered; it reads KTHNKENPPAQAESTDKPPQSAPEQQEQEQQQQQQTSGDK. A compositionally biased stretch (low complexity) spans 476 to 487; sequence EQQEQEQQQQQQ.

This sequence belongs to the krueppel C2H2-type zinc-finger protein family.

Its subcellular location is the nucleus. May be involved in BMP2-induced transcription. The sequence is that of Zinc finger and BTB domain-containing protein 24 (zbtb24) from Danio rerio (Zebrafish).